A 218-amino-acid chain; its full sequence is MLHSPHKQPQNHKCGANFLQEDSKEALVFKWLISAGHYQPPRPTESVSALSTVHAVIFKAASSIYNRGHKFYLEKKGGTMASNSLFSAVTPCQQSFFWNKTLPVAFKVVALGEVPDGTVVTVMAGNDENYSAELRNASAVMKNQVARFNDLRFVGRSGRGKSFTLTITVFTNPPQVATYHRAIKVTVDGPREPRRHRQKLDDSKPSLFSDRLSDLGRI.

The Runt domain occupies 67–195; sequence RGHKFYLEKK…TVDGPREPRR (129 aa). Positions 122-138 are required for interaction with FOXO1; it reads VMAGNDENYSAELRNAS. Residues 189–218 are disordered; that stretch reads GPREPRRHRQKLDDSKPSLFSDRLSDLGRI. A Glycyl lysine isopeptide (Lys-Gly) (interchain with G-Cter in SUMO2) cross-link involves residue Lys204.

In terms of assembly, heterodimer of an alpha and a beta subunit. The alpha subunit binds DNA as a monomer and through the Runt domain. DNA-binding is increased by heterodimerization. Interacts with XRCC6 (Ku70) and XRCC5 (Ku80). Interacts with CCNB1, KAT6A and KAT6B. Interacts with HIVEP3. Interacts with IFI204. Interaction with SATB2; the interaction results in enhanced DNA binding and transactivation by these transcription factors. Binds to HIPK3. Interacts with FOXO1 (via a C-terminal region); the interaction inhibits RUNX2 transcriptional activity towards BGLAP. Interacts with FOXP3. Interacts with TMEM119. Interacts with OLFM2. Interacts with IPO7; the interaction inhibits RUNX2 nuclear translocation in osteoblasts. Post-translationally, phosphorylated; probably by MAP kinases (MAPK). Phosphorylation by HIPK3 is required for the SPEN/MINT and FGF2 transactivation during osteoblastic differentiation.

It is found in the nucleus. Its subcellular location is the cytoplasm. Transcription factor involved in osteoblastic differentiation and skeletal morphogenesis. Essential for the maturation of osteoblasts and both intramembranous and endochondral ossification. CBF binds to the core site, 5'-PYGPYGGT-3', of a number of enhancers and promoters, including murine leukemia virus, polyomavirus enhancer, T-cell receptor enhancers, osteocalcin, osteopontin, bone sialoprotein, alpha 1(I) collagen, LCK, IL-3 and GM-CSF promoters. Inhibits KAT6B-dependent transcriptional activation. In osteoblasts, supports transcription activation: synergizes with SPEN/MINT to enhance FGFR2-mediated activation of the osteocalcin FGF-responsive element (OCFRE). The chain is Runt-related transcription factor 2 (Runx2) from Rattus norvegicus (Rat).